Consider the following 163-residue polypeptide: Nucleotide-binding protein Npun_R4736 (163 aa).

It belongs to the YajQ family.

Functionally, nucleotide-binding protein. The polypeptide is Nucleotide-binding protein Npun_R4736 (Nostoc punctiforme (strain ATCC 29133 / PCC 73102)).